Consider the following 553-residue polypeptide: Dihydroxy-acid dehydratase (553 aa).

D78 lines the Mg(2+) pocket. Residue C119 participates in [2Fe-2S] cluster binding. Mg(2+) contacts are provided by D120 and K121. K121 bears the N6-carboxylysine mark. C191 contacts [2Fe-2S] cluster. E442 is a Mg(2+) binding site. S468 acts as the Proton acceptor in catalysis.

The protein belongs to the IlvD/Edd family. Homodimer. [2Fe-2S] cluster is required as a cofactor. Mg(2+) serves as cofactor.

It catalyses the reaction (2R)-2,3-dihydroxy-3-methylbutanoate = 3-methyl-2-oxobutanoate + H2O. It carries out the reaction (2R,3R)-2,3-dihydroxy-3-methylpentanoate = (S)-3-methyl-2-oxopentanoate + H2O. The protein operates within amino-acid biosynthesis; L-isoleucine biosynthesis; L-isoleucine from 2-oxobutanoate: step 3/4. It functions in the pathway amino-acid biosynthesis; L-valine biosynthesis; L-valine from pyruvate: step 3/4. Functionally, functions in the biosynthesis of branched-chain amino acids. Catalyzes the dehydration of (2R,3R)-2,3-dihydroxy-3-methylpentanoate (2,3-dihydroxy-3-methylvalerate) into 2-oxo-3-methylpentanoate (2-oxo-3-methylvalerate) and of (2R)-2,3-dihydroxy-3-methylbutanoate (2,3-dihydroxyisovalerate) into 2-oxo-3-methylbutanoate (2-oxoisovalerate), the penultimate precursor to L-isoleucine and L-valine, respectively. This is Dihydroxy-acid dehydratase from Carboxydothermus hydrogenoformans (strain ATCC BAA-161 / DSM 6008 / Z-2901).